Reading from the N-terminus, the 161-residue chain is Phosphopantetheine adenylyltransferase (161 aa).

S11 contributes to the substrate binding site. ATP-binding positions include 11-12 and H19; that span reads SF. Substrate is bound by residues K43, L75, and R89. ATP is bound by residues 90-92, E100, and 125-131; these read GLR and YSYLSSS.

It belongs to the bacterial CoaD family. Homohexamer. The cofactor is Mg(2+).

Its subcellular location is the cytoplasm. The enzyme catalyses (R)-4'-phosphopantetheine + ATP + H(+) = 3'-dephospho-CoA + diphosphate. It participates in cofactor biosynthesis; coenzyme A biosynthesis; CoA from (R)-pantothenate: step 4/5. Its function is as follows. Reversibly transfers an adenylyl group from ATP to 4'-phosphopantetheine, yielding dephospho-CoA (dPCoA) and pyrophosphate. This chain is Phosphopantetheine adenylyltransferase, found in Geotalea daltonii (strain DSM 22248 / JCM 15807 / FRC-32) (Geobacter daltonii).